An 818-amino-acid polypeptide reads, in one-letter code: Actin filament-associated protein 1-like 2 (818 aa).

Residue tyrosine 56 is modified to Phosphotyrosine. Positions 66-163 (QNAESQGKAP…SKGKSAPYQW (98 aa)) are disordered. Over residues 85-94 (EPSQHSSAPQ) the composition is skewed to polar residues. Over residues 123 to 139 (YYEEAEPYDTSLNEDGE) the composition is skewed to acidic residues. PH domains lie at 175–271 (DARI…EVSG) and 353–447 (SLET…SESG). At serine 408 the chain carries Phosphoserine. Tyrosine 413 bears the Phosphotyrosine mark. The residue at position 484 (serine 484) is a Phosphoserine. The tract at residues 513 to 532 (AAVEPTEEATPVADDPNERE) is disordered. The stretch at 652–749 (AEIKLGKNRT…VKDNLKKAEA (98 aa)) forms a coiled coil. Residues 765–787 (NVSPRPKAVTPASAPDCTPVNSA) are disordered.

Interacts with SRC. Interacts with LCK when tyrosine phosphorylated. Tyrosine phosphorylated (by SRC). As to expression, detected in spleen and thyroid, and at lower levels in kidney, brain, lung and pancreas.

It is found in the cytoplasm. In terms of biological role, may play a role in a signaling cascade by enhancing the kinase activity of SRC. Contributes to SRC-regulated transcription activation. The polypeptide is Actin filament-associated protein 1-like 2 (AFAP1L2) (Homo sapiens (Human)).